We begin with the raw amino-acid sequence, 159 residues long: CASP-like protein 1C1 (159 aa).

Topologically, residues 1 to 6 (MAKIKR) are cytoplasmic. Residues 7 to 27 (IITTLVRLLVLGAALSATIVM) traverse the membrane as a helical segment. The Extracellular segment spans residues 28-50 (VTSHDSAEVLNLSFDAKYTNARA). N-linked (GlcNAc...) asparagine glycosylation occurs at asparagine 38. A helical transmembrane segment spans residues 51-73 (FVYFAITNAIASGYSFIALFLSF). The Cytoplasmic portion of the chain corresponds to 74 to 86 (STPLWHLVFLLDV). Residues 87-107 (FMTLLLTSSISVALAIADVGK) form a helical membrane-spanning segment. The Extracellular portion of the chain corresponds to 108–130 (KGNSHAGWLPVCGQVPEFCDHVT). Residues 131 to 151 (GALIAGFSAAVLYLVLLLFSI) traverse the membrane as a helical segment. Topologically, residues 152–159 (HAVLNPKP) are cytoplasmic.

The protein belongs to the Casparian strip membrane proteins (CASP) family. In terms of assembly, homodimer and heterodimers.

It is found in the cell membrane. This Vitis vinifera (Grape) protein is CASP-like protein 1C1.